A 488-amino-acid chain; its full sequence is Ankyrin repeat domain-containing protein 13C (488 aa).

Residues 1 to 60 (MTGEKIRSVRKERKSGLDLLEPDEEPAATGPAKHRGSKIFSGGNHRISRSSSSPGDPDGA) form a disordered region. The segment covering 41–59 (SGGNHRISRSSSSPGDPDG) has biased composition (low complexity). ANK repeat units lie at residues 58–87 (DGAY…IAQK), 90–119 (HGNT…PVKV), and 123–152 (QGWS…QQSR).

It is found in the endoplasmic reticulum membrane. In terms of biological role, acts as a molecular chaperone for G protein-coupled receptors, regulating their biogenesis and exit from the ER. This chain is Ankyrin repeat domain-containing protein 13C (ankrd13c), found in Danio rerio (Zebrafish).